The primary structure comprises 417 residues: Glutamyl-tRNA reductase (417 aa).

Residues 48 to 51, Ser-100, 105 to 107, and Gln-111 each bind substrate; these read TCNR and EDQ. Catalysis depends on Cys-49, which acts as the Nucleophile. 180 to 185 lines the NADP(+) pocket; it reads GAGETG.

The protein belongs to the glutamyl-tRNA reductase family. In terms of assembly, homodimer.

The catalysed reaction is (S)-4-amino-5-oxopentanoate + tRNA(Glu) + NADP(+) = L-glutamyl-tRNA(Glu) + NADPH + H(+). It functions in the pathway porphyrin-containing compound metabolism; protoporphyrin-IX biosynthesis; 5-aminolevulinate from L-glutamyl-tRNA(Glu): step 1/2. Functionally, catalyzes the NADPH-dependent reduction of glutamyl-tRNA(Glu) to glutamate 1-semialdehyde (GSA). The chain is Glutamyl-tRNA reductase from Methanothrix thermoacetophila (strain DSM 6194 / JCM 14653 / NBRC 101360 / PT) (Methanosaeta thermophila).